The chain runs to 369 residues: Histidinol-phosphate aminotransferase 2 (369 aa).

N6-(pyridoxal phosphate)lysine is present on Lys-231.

This sequence belongs to the class-II pyridoxal-phosphate-dependent aminotransferase family. Histidinol-phosphate aminotransferase subfamily. Homodimer. It depends on pyridoxal 5'-phosphate as a cofactor.

The enzyme catalyses L-histidinol phosphate + 2-oxoglutarate = 3-(imidazol-4-yl)-2-oxopropyl phosphate + L-glutamate. The protein operates within amino-acid biosynthesis; L-histidine biosynthesis; L-histidine from 5-phospho-alpha-D-ribose 1-diphosphate: step 7/9. In Legionella pneumophila subsp. pneumophila (strain Philadelphia 1 / ATCC 33152 / DSM 7513), this protein is Histidinol-phosphate aminotransferase 2.